The sequence spans 510 residues: Beta-galactosidase (510 aa).

Glutamate 210 functions as the Proton donor in the catalytic mechanism. The active-site Nucleophile is the glutamate 414.

This sequence belongs to the glycosyl hydrolase 1 family.

It catalyses the reaction Hydrolysis of terminal non-reducing beta-D-galactose residues in beta-D-galactosides.. The polypeptide is Beta-galactosidase (Pyrococcus woesei).